The following is an 892-amino-acid chain: Putative disease resistance protein At4g10780 (892 aa).

Positions 24–63 form a coiled coil; it reads SLGNYIHKLKDNIVALEKAIEDLTATRDDVLRRVQMEEGK. The region spanning 137–440 is the NB-ARC domain; that stretch reads IVAAPAPKLE…ICEGFIDGNI (304 aa). ATP is bound at residue 180–187; sequence GMGGVGKT. LRR repeat units lie at residues 515–536, 537–559, 562–584, 586–608, 609–631, and 632–654; these read AVRRLSLMNNGIEEISGSPECP, ELTTLFLQENKSLVHISGEFFRH, KLVVLDLSENHQLDGLPEQISEL, ALRYLDLSHTNIEGLPACLQDLK, TLIHLNLECMRRLGSIAGISKLS, and SLRTLGLRNSNIMLDVMSVKELH.

This sequence belongs to the disease resistance NB-LRR family.

Functionally, potential disease resistance protein. This is Putative disease resistance protein At4g10780 from Arabidopsis thaliana (Mouse-ear cress).